Reading from the N-terminus, the 80-residue chain is HssA/B-like protein 2 (80 aa).

The disordered stretch occupies residues 1 to 29; the sequence is MSLLSALTSISKPMNTSSKSSVSSKNVSG. Low complexity predominate over residues 9-29; the sequence is SISKPMNTSSKSSVSSKNVSG.

This sequence belongs to the hssA/B family.

The polypeptide is HssA/B-like protein 2 (hssl2) (Dictyostelium discoideum (Social amoeba)).